Here is a 388-residue protein sequence, read N- to C-terminus: MNKEELLKKYEATSNEKAKDVFFSPGRINVIGEHTDYNGGHVFPAPISLGVYGVYGPRDDKKVRLYSGNVDGDIVEFDIDDTNVEKDEDRFWANYFKGMITYLREKYDGIDHGFNLYIEANLPSGSGLSSSAAIEMLMGIILKDEFNLDVDRVSLAKMGQRTENEFIGLNSGIMDQFACIMGKKNSAIFLDCNTLKYEYLPLALGDYEIIIMATNNPHTLADSAYNNRVAECGRALKKLQQKLDIKALGELDNDTFDEYSYLINDETEIKRARHAVSENQRTLRATQAMKDGDLEKLGRLINASHESLHYDYEVTGKELDTLAEASWKQPGVLGARMIGGGFGGSAIAIVKKSEAENFKKNVGKIYRDAVGYDASFYDAEIVDGTKRI.

Glu-33–Asp-36 contacts substrate. Residues Ser-67 and Gly-125–Ser-131 each bind ATP. Positions 131 and 163 each coordinate Mg(2+). The active-site Proton acceptor is the Asp-175. Tyr-225 lines the substrate pocket.

It belongs to the GHMP kinase family. GalK subfamily.

Its subcellular location is the cytoplasm. It carries out the reaction alpha-D-galactose + ATP = alpha-D-galactose 1-phosphate + ADP + H(+). It participates in carbohydrate metabolism; galactose metabolism. In terms of biological role, catalyzes the transfer of the gamma-phosphate of ATP to D-galactose to form alpha-D-galactose-1-phosphate (Gal-1-P). The chain is Galactokinase from Lactobacillus helveticus (Lactobacillus suntoryeus).